Here is a 105-residue protein sequence, read N- to C-terminus: Large ribosomal subunit protein bL34m (105 aa).

The N-terminal 16 residues, 1 to 16 (MPLFARLCQPQSRRMF), are a transit peptide targeting the mitochondrion.

The protein belongs to the bacterial ribosomal protein bL34 family. Component of the mitochondrial large ribosomal subunit (mt-LSU). Mature yeast 74S mitochondrial ribosomes consist of a small (37S) and a large (54S) subunit. The 37S small subunit contains a 15S ribosomal RNA (15S mt-rRNA) and 34 different proteins. The 54S large subunit contains a 21S rRNA (21S mt-rRNA) and 46 different proteins.

The protein localises to the mitochondrion. In terms of biological role, component of the mitochondrial ribosome (mitoribosome), a dedicated translation machinery responsible for the synthesis of mitochondrial genome-encoded proteins, including at least some of the essential transmembrane subunits of the mitochondrial respiratory chain. The mitoribosomes are attached to the mitochondrial inner membrane and translation products are cotranslationally integrated into the membrane. The sequence is that of Large ribosomal subunit protein bL34m from Saccharomyces cerevisiae (strain ATCC 204508 / S288c) (Baker's yeast).